The sequence spans 387 residues: tRNA N6-adenosine threonylcarbamoyltransferase (387 aa).

Fe cation is bound by residues His-112 and His-116. Residues 134–138 (LASGG), Asp-167, Gly-180, and Asn-325 each bind substrate. Asp-353 is a binding site for Fe cation.

It belongs to the KAE1 / TsaD family. Fe(2+) is required as a cofactor.

It localises to the cytoplasm. It catalyses the reaction L-threonylcarbamoyladenylate + adenosine(37) in tRNA = N(6)-L-threonylcarbamoyladenosine(37) in tRNA + AMP + H(+). Required for the formation of a threonylcarbamoyl group on adenosine at position 37 (t(6)A37) in tRNAs that read codons beginning with adenine. Is involved in the transfer of the threonylcarbamoyl moiety of threonylcarbamoyl-AMP (TC-AMP) to the N6 group of A37, together with TsaE and TsaB. TsaD likely plays a direct catalytic role in this reaction. In Rickettsia typhi (strain ATCC VR-144 / Wilmington), this protein is tRNA N6-adenosine threonylcarbamoyltransferase.